The chain runs to 301 residues: uncharacterized protein (301 aa).

Residues 45–286 (KELSDGWALN…EELGKMFTEL (242 aa)) form the Radical SAM core domain.

This is an uncharacterized protein from Acidianus two-tailed virus (ATV).